Consider the following 351-residue polypeptide: Nicotinate-nucleotide--dimethylbenzimidazole phosphoribosyltransferase (351 aa).

The Proton acceptor role is filled by Glu318.

It belongs to the CobT family.

It carries out the reaction 5,6-dimethylbenzimidazole + nicotinate beta-D-ribonucleotide = alpha-ribazole 5'-phosphate + nicotinate + H(+). It functions in the pathway nucleoside biosynthesis; alpha-ribazole biosynthesis; alpha-ribazole from 5,6-dimethylbenzimidazole: step 1/2. Its function is as follows. Catalyzes the synthesis of alpha-ribazole-5'-phosphate from nicotinate mononucleotide (NAMN) and 5,6-dimethylbenzimidazole (DMB). This is Nicotinate-nucleotide--dimethylbenzimidazole phosphoribosyltransferase from Chloroflexus aurantiacus (strain ATCC 29366 / DSM 635 / J-10-fl).